The chain runs to 272 residues: Hydroxyethylthiazole kinase (272 aa).

Residue methionine 44 coordinates substrate. ATP contacts are provided by lysine 119 and threonine 172. Glycine 199 provides a ligand contact to substrate.

Belongs to the Thz kinase family. It depends on Mg(2+) as a cofactor.

The catalysed reaction is 5-(2-hydroxyethyl)-4-methylthiazole + ATP = 4-methyl-5-(2-phosphooxyethyl)-thiazole + ADP + H(+). It functions in the pathway cofactor biosynthesis; thiamine diphosphate biosynthesis; 4-methyl-5-(2-phosphoethyl)-thiazole from 5-(2-hydroxyethyl)-4-methylthiazole: step 1/1. Its function is as follows. Catalyzes the phosphorylation of the hydroxyl group of 4-methyl-5-beta-hydroxyethylthiazole (THZ). This Enterococcus faecalis (strain ATCC 700802 / V583) protein is Hydroxyethylthiazole kinase.